The sequence spans 282 residues: Armadillo repeat-containing protein 1 (282 aa).

M1 is modified (N-acetylmethionine). One copy of the ARM repeat lies at 39-81 (GCLPGLILSMDHPNPPVVHSALLALRYLAECRANREKMKGELG). T137 is subject to Phosphothreonine. Phosphoserine occurs at positions 189, 246, 260, and 267. The disordered stretch occupies residues 239-261 (DYLPEDESPTKEQDKAVSRVGSH). Residues 246–255 (SPTKEQDKAV) show a composition bias toward basic and acidic residues.

In terms of assembly, interacts with mitochondrial contact site and cristae organizing system (MICOS) complex components IMMT/MIC60 and MICOS10/MIC10. Interacts with mitochondrial outer membrane sorting assembly machinery (SAM) complex components SAMM50 and MTX1.

The protein resides in the cytoplasm. The protein localises to the mitochondrion. It localises to the mitochondrion outer membrane. In terms of biological role, in association with mitochondrial contact site and cristae organizing system (MICOS) complex components and mitochondrial outer membrane sorting assembly machinery (SAM) complex components may regulate mitochondrial dynamics playing a role in determining mitochondrial length, distribution and motility. This is Armadillo repeat-containing protein 1 (ARMC1) from Pongo abelii (Sumatran orangutan).